The following is a 277-amino-acid chain: Thymidylate synthase (277 aa).

R27 is a binding site for dUMP. A (6R)-5,10-methylene-5,6,7,8-tetrahydrofolate-binding site is contributed by H57. 132–133 is a binding site for dUMP; it reads RR. The active-site Nucleophile is C152. Residues 179–182, N190, and 220–222 contribute to the dUMP site; these read RSAD and HIY. Residue D182 coordinates (6R)-5,10-methylene-5,6,7,8-tetrahydrofolate. Residue A276 coordinates (6R)-5,10-methylene-5,6,7,8-tetrahydrofolate.

This sequence belongs to the thymidylate synthase family. Bacterial-type ThyA subfamily. Homodimer.

It is found in the cytoplasm. The enzyme catalyses dUMP + (6R)-5,10-methylene-5,6,7,8-tetrahydrofolate = 7,8-dihydrofolate + dTMP. Its pathway is pyrimidine metabolism; dTTP biosynthesis. Catalyzes the reductive methylation of 2'-deoxyuridine-5'-monophosphate (dUMP) to 2'-deoxythymidine-5'-monophosphate (dTMP) while utilizing 5,10-methylenetetrahydrofolate (mTHF) as the methyl donor and reductant in the reaction, yielding dihydrofolate (DHF) as a by-product. This enzymatic reaction provides an intracellular de novo source of dTMP, an essential precursor for DNA biosynthesis. The polypeptide is Thymidylate synthase (Acidovorax sp. (strain JS42)).